The chain runs to 395 residues: Flap endonuclease 1 (395 aa).

The interval 1–104 (MGIKHLYQII…GELAKRFMRK (104 aa)) is N-domain. Residue Asp-34 participates in Mg(2+) binding. The DNA site is built by Arg-47 and Arg-70. The Mg(2+) site is built by Asp-86, Glu-158, Glu-160, Asp-179, and Asp-181. The tract at residues 122–253 (EVEKFSRRTV…NTALKLIRDH (132 aa)) is I-domain. Residue Glu-158 coordinates DNA. The DNA site is built by Gly-231 and Asp-233. Position 233 (Asp-233) interacts with Mg(2+). Residues 341-349 (QQSRLEGFF) form an interaction with PCNA region. Positions 360 to 389 (AVLKRKHEEKLELQKKKKKEDSKAKKEAKS) are enriched in basic and acidic residues. The interval 360–395 (AVLKRKHEEKLELQKKKKKEDSKAKKEAKSKPRGTT) is disordered.

This sequence belongs to the XPG/RAD2 endonuclease family. FEN1 subfamily. Interacts with PCNA. Three molecules of FEN1 bind to one PCNA trimer with each molecule binding to one PCNA monomer. PCNA stimulates the nuclease activity without altering cleavage specificity. Mg(2+) serves as cofactor. In terms of processing, phosphorylated. Phosphorylation upon DNA damage induces relocalization to the nuclear plasma.

It localises to the nucleus. Its subcellular location is the nucleolus. The protein resides in the nucleoplasm. It is found in the mitochondrion. In terms of biological role, structure-specific nuclease with 5'-flap endonuclease and 5'-3' exonuclease activities involved in DNA replication and repair. During DNA replication, cleaves the 5'-overhanging flap structure that is generated by displacement synthesis when DNA polymerase encounters the 5'-end of a downstream Okazaki fragment. It enters the flap from the 5'-end and then tracks to cleave the flap base, leaving a nick for ligation. Also involved in the long patch base excision repair (LP-BER) pathway, by cleaving within the apurinic/apyrimidinic (AP) site-terminated flap. Acts as a genome stabilization factor that prevents flaps from equilibrating into structures that lead to duplications and deletions. Also possesses 5'-3' exonuclease activity on nicked or gapped double-stranded DNA, and exhibits RNase H activity. Also involved in replication and repair of rDNA and in repairing mitochondrial DNA. This Ajellomyces capsulatus (strain H143) (Darling's disease fungus) protein is Flap endonuclease 1.